We begin with the raw amino-acid sequence, 146 residues long: Nucleoside diphosphate kinase (146 aa).

Residues Lys-11, Phe-59, Arg-87, Thr-93, Arg-104, and Asn-114 each coordinate ATP. Residue His-117 is the Pros-phosphohistidine intermediate of the active site.

This sequence belongs to the NDK family. Homotetramer. It depends on Mg(2+) as a cofactor.

The protein localises to the cytoplasm. It catalyses the reaction a 2'-deoxyribonucleoside 5'-diphosphate + ATP = a 2'-deoxyribonucleoside 5'-triphosphate + ADP. The enzyme catalyses a ribonucleoside 5'-diphosphate + ATP = a ribonucleoside 5'-triphosphate + ADP. Major role in the synthesis of nucleoside triphosphates other than ATP. The ATP gamma phosphate is transferred to the NDP beta phosphate via a ping-pong mechanism, using a phosphorylated active-site intermediate. This Anaeromyxobacter sp. (strain Fw109-5) protein is Nucleoside diphosphate kinase.